The primary structure comprises 271 residues: Orotidine 5'-phosphate decarboxylase (271 aa).

The active-site Proton donor is the K97.

It belongs to the OMP decarboxylase family. Type 2 subfamily.

The catalysed reaction is orotidine 5'-phosphate + H(+) = UMP + CO2. It functions in the pathway pyrimidine metabolism; UMP biosynthesis via de novo pathway; UMP from orotate: step 2/2. The polypeptide is Orotidine 5'-phosphate decarboxylase (Leptospira borgpetersenii serovar Hardjo-bovis (strain L550)).